The chain runs to 217 residues: Phosphoribosylformylglycinamidine synthase subunit PurQ (217 aa).

One can recognise a Glutamine amidotransferase type-1 domain in the interval 2 to 217 (SIGVLVFPGS…GRVLLQGLLS (216 aa)). The active-site Nucleophile is the Cys-86. Catalysis depends on residues His-194 and Glu-196.

As to quaternary structure, part of the FGAM synthase complex composed of 1 PurL, 1 PurQ and 2 PurS subunits.

It is found in the cytoplasm. It carries out the reaction N(2)-formyl-N(1)-(5-phospho-beta-D-ribosyl)glycinamide + L-glutamine + ATP + H2O = 2-formamido-N(1)-(5-O-phospho-beta-D-ribosyl)acetamidine + L-glutamate + ADP + phosphate + H(+). The enzyme catalyses L-glutamine + H2O = L-glutamate + NH4(+). It participates in purine metabolism; IMP biosynthesis via de novo pathway; 5-amino-1-(5-phospho-D-ribosyl)imidazole from N(2)-formyl-N(1)-(5-phospho-D-ribosyl)glycinamide: step 1/2. Its function is as follows. Part of the phosphoribosylformylglycinamidine synthase complex involved in the purines biosynthetic pathway. Catalyzes the ATP-dependent conversion of formylglycinamide ribonucleotide (FGAR) and glutamine to yield formylglycinamidine ribonucleotide (FGAM) and glutamate. The FGAM synthase complex is composed of three subunits. PurQ produces an ammonia molecule by converting glutamine to glutamate. PurL transfers the ammonia molecule to FGAR to form FGAM in an ATP-dependent manner. PurS interacts with PurQ and PurL and is thought to assist in the transfer of the ammonia molecule from PurQ to PurL. This Parasynechococcus marenigrum (strain WH8102) protein is Phosphoribosylformylglycinamidine synthase subunit PurQ.